A 547-amino-acid polypeptide reads, in one-letter code: Chaperonin GroEL (547 aa).

ATP contacts are provided by residues 30–33 (TLGP), Lys51, 87–91 (DGTTT), Gly415, and Asp495.

It belongs to the chaperonin (HSP60) family. As to quaternary structure, forms a cylinder of 14 subunits composed of two heptameric rings stacked back-to-back. Interacts with the co-chaperonin GroES.

The protein localises to the cytoplasm. The enzyme catalyses ATP + H2O + a folded polypeptide = ADP + phosphate + an unfolded polypeptide.. Functionally, together with its co-chaperonin GroES, plays an essential role in assisting protein folding. The GroEL-GroES system forms a nano-cage that allows encapsulation of the non-native substrate proteins and provides a physical environment optimized to promote and accelerate protein folding. In Rhizobium leguminosarum bv. trifolii (strain WSM2304), this protein is Chaperonin GroEL.